A 190-amino-acid chain; its full sequence is Shikimate kinase (190 aa).

19-24 contacts ATP; the sequence is GSGKTT. T23 is a binding site for Mg(2+). Substrate is bound by residues D41, R65, and G87. Position 124 (R124) interacts with ATP. R143 provides a ligand contact to substrate.

Belongs to the shikimate kinase family. In terms of assembly, monomer. The cofactor is Mg(2+).

The protein resides in the cytoplasm. The enzyme catalyses shikimate + ATP = 3-phosphoshikimate + ADP + H(+). Its pathway is metabolic intermediate biosynthesis; chorismate biosynthesis; chorismate from D-erythrose 4-phosphate and phosphoenolpyruvate: step 5/7. Catalyzes the specific phosphorylation of the 3-hydroxyl group of shikimic acid using ATP as a cosubstrate. The chain is Shikimate kinase from Synechococcus sp. (strain ATCC 27144 / PCC 6301 / SAUG 1402/1) (Anacystis nidulans).